The following is a 183-amino-acid chain: Ribonuclease M5 (183 aa).

The region spanning 6–90 (KEVIVVEGKD…AYISRVSGTK (85 aa)) is the Toprim domain. Residues Glu-12, Asp-59, and Asp-61 each contribute to the Mg(2+) site.

The protein belongs to the ribonuclease M5 family. Mg(2+) is required as a cofactor.

Its subcellular location is the cytoplasm. The enzyme catalyses Endonucleolytic cleavage of RNA, removing 21 and 42 nucleotides, respectively, from the 5'- and 3'-termini of a 5S-rRNA precursor.. Functionally, required for correct processing of both the 5' and 3' ends of 5S rRNA precursor. Cleaves both sides of a double-stranded region yielding mature 5S rRNA in one step. This is Ribonuclease M5 from Fusobacterium nucleatum subsp. nucleatum (strain ATCC 25586 / DSM 15643 / BCRC 10681 / CIP 101130 / JCM 8532 / KCTC 2640 / LMG 13131 / VPI 4355).